The following is a 156-amino-acid chain: Lipoprotein signal peptidase (156 aa).

Residues 62–82 (GNTVFMVLSAVIIAILSYTKI) form a helical membrane-spanning segment. Catalysis depends on residues Asp-115 and Asp-133. A helical transmembrane segment spans residues 126–146 (WPAFNLADLTITCGVIVFLAM).

It belongs to the peptidase A8 family.

It localises to the cell inner membrane. It carries out the reaction Release of signal peptides from bacterial membrane prolipoproteins. Hydrolyzes -Xaa-Yaa-Zaa-|-(S,diacylglyceryl)Cys-, in which Xaa is hydrophobic (preferably Leu), and Yaa (Ala or Ser) and Zaa (Gly or Ala) have small, neutral side chains.. It functions in the pathway protein modification; lipoprotein biosynthesis (signal peptide cleavage). Its function is as follows. This protein specifically catalyzes the removal of signal peptides from prolipoproteins. The polypeptide is Lipoprotein signal peptidase (Anaplasma phagocytophilum (strain HZ)).